Reading from the N-terminus, the 807-residue chain is uncharacterized protein (807 aa).

Residues 281 to 566 enclose the Reverse transcriptase domain; the sequence is IIQSLKSEEF…DKILFLGTNI (286 aa).

It localises to the mitochondrion. This is an uncharacterized protein from Schizosaccharomyces pombe (strain 972 / ATCC 24843) (Fission yeast).